Reading from the N-terminus, the 807-residue chain is Zinc finger protein 594 (807 aa).

The interval 1 to 23 (MKEWKSKMEISEEKKSARAASEK) is disordered. 8 consecutive C2H2-type zinc fingers follow at residues 127–149 (YECK…QRIH), 155–177 (YVCN…QRIH), 183–205 (YICH…KQIH), 211–233 (YECK…QRIH), 239–261 (YLCN…HRIH), 267–289 (YECY…QRIH), 295–317 (LKCN…QRLH), and 323–345 (YECH…QRLH). The C2H2-type 9; degenerate zinc finger occupies 348–370 (EKIEECEKTFSKDEELREEQRIH). 6 C2H2-type zinc fingers span residues 376 to 398 (YWCN…QVTH), 404 to 426 (YECK…HRIH), 432 to 454 (CVCS…HRVH), 460 to 482 (YECS…QKIH), 488 to 510 (YQCT…RRIH), and 516 to 538 (YECK…QSLH). The C2H2-type 16; degenerate zinc finger occupies 543–562 (LECEKTFSQDEELRGEQKIH). 6 C2H2-type zinc fingers span residues 568-590 (YWCN…QVTH), 596-618 (YECK…HRIH), 624-646 (YVCN…HRIH), 652-674 (YECS…QKIH), 680-702 (YQCS…RRLH), and 708-730 (YECK…QRLH). The C2H2-type 23; degenerate zinc-finger motif lies at 733-755 (EKLEECEKTFSKDEELRKEQRTH). The C2H2-type 24 zinc-finger motif lies at 761–783 (YWCNQCSRTFQGSSDLIRHQVTH).

This sequence belongs to the krueppel C2H2-type zinc-finger protein family.

It localises to the nucleus. Its function is as follows. May be involved in transcriptional regulation. The protein is Zinc finger protein 594 (ZNF594) of Homo sapiens (Human).